The chain runs to 535 residues: CTP synthase (535 aa).

The interval Met-1–Leu-267 is amidoligase domain. Ser-13 contributes to the CTP binding site. Ser-13 contacts UTP. Ser-14–Ile-19 serves as a coordination point for ATP. Position 54 (Tyr-54) interacts with L-glutamine. Asp-71 lines the ATP pocket. Mg(2+) is bound by residues Asp-71 and Glu-141. CTP is bound by residues Asp-148–Glu-150, Lys-188–Gln-193, and Lys-224. UTP contacts are provided by residues Lys-188–Gln-193 and Lys-224. The region spanning Thr-292 to Ser-534 is the Glutamine amidotransferase type-1 domain. Gly-354 is a binding site for L-glutamine. Cys-381 serves as the catalytic Nucleophile; for glutamine hydrolysis. L-glutamine is bound by residues Leu-382 to Gln-385, Glu-405, and Arg-462. Residues His-507 and Glu-509 contribute to the active site.

This sequence belongs to the CTP synthase family. Homotetramer.

It carries out the reaction UTP + L-glutamine + ATP + H2O = CTP + L-glutamate + ADP + phosphate + 2 H(+). The catalysed reaction is L-glutamine + H2O = L-glutamate + NH4(+). The enzyme catalyses UTP + NH4(+) + ATP = CTP + ADP + phosphate + 2 H(+). It participates in pyrimidine metabolism; CTP biosynthesis via de novo pathway; CTP from UDP: step 2/2. Allosterically activated by GTP, when glutamine is the substrate; GTP has no effect on the reaction when ammonia is the substrate. The allosteric effector GTP functions by stabilizing the protein conformation that binds the tetrahedral intermediate(s) formed during glutamine hydrolysis. Inhibited by the product CTP, via allosteric rather than competitive inhibition. Functionally, catalyzes the ATP-dependent amination of UTP to CTP with either L-glutamine or ammonia as the source of nitrogen. Regulates intracellular CTP levels through interactions with the four ribonucleotide triphosphates. The protein is CTP synthase of Bacillus pumilus (strain SAFR-032).